The primary structure comprises 629 residues: Dihydroxy-acid dehydratase 2 (629 aa).

Asp-82 is a binding site for Mg(2+). Residue Cys-123 coordinates [2Fe-2S] cluster. Mg(2+)-binding residues include Asp-124 and Lys-125. Lys-125 carries the N6-carboxylysine modification. Residue Cys-197 coordinates [2Fe-2S] cluster. Mg(2+) is bound at residue Glu-493. Ser-519 (proton acceptor) is an active-site residue. Residues 603–629 (DKGGVRRLPPDELGGPEAAFDTQTRAG) form a disordered region.

Belongs to the IlvD/Edd family. As to quaternary structure, homodimer. [2Fe-2S] cluster is required as a cofactor. It depends on Mg(2+) as a cofactor.

The catalysed reaction is (2R)-2,3-dihydroxy-3-methylbutanoate = 3-methyl-2-oxobutanoate + H2O. It catalyses the reaction (2R,3R)-2,3-dihydroxy-3-methylpentanoate = (S)-3-methyl-2-oxopentanoate + H2O. It functions in the pathway amino-acid biosynthesis; L-isoleucine biosynthesis; L-isoleucine from 2-oxobutanoate: step 3/4. The protein operates within amino-acid biosynthesis; L-valine biosynthesis; L-valine from pyruvate: step 3/4. Its function is as follows. Functions in the biosynthesis of branched-chain amino acids. Catalyzes the dehydration of (2R,3R)-2,3-dihydroxy-3-methylpentanoate (2,3-dihydroxy-3-methylvalerate) into 2-oxo-3-methylpentanoate (2-oxo-3-methylvalerate) and of (2R)-2,3-dihydroxy-3-methylbutanoate (2,3-dihydroxyisovalerate) into 2-oxo-3-methylbutanoate (2-oxoisovalerate), the penultimate precursor to L-isoleucine and L-valine, respectively. This is Dihydroxy-acid dehydratase 2 from Nocardia farcinica (strain IFM 10152).